Reading from the N-terminus, the 532-residue chain is Aspartate--tRNA ligase 1, cytoplasmic (532 aa).

Positions 7-41 (LEECGEKISKKESKKRAAKLEKLLRKQEREEATSS) form a coiled coil. The tract at residues 31-58 (RKQEREEATSSSLSLEEEDESCSSNYGD) is disordered. Positions 88–169 (VSIRGRLHKN…QVEIHVRKMY (82 aa)) form a DNA-binding region, OB. Glu260 provides a ligand contact to L-aspartate. The tract at residues 282–285 (QLHK) is aspartate. Arg304 is a binding site for L-aspartate. ATP-binding positions include 304–306 (RAE), 312–314 (RHL), and Glu455. Mg(2+) contacts are provided by Glu455 and Ser458. L-aspartate is bound by residues Ser458 and Arg462. 503 to 506 (GLER) is a binding site for ATP.

The protein belongs to the class-II aminoacyl-tRNA synthetase family. Type 2 subfamily.

The protein resides in the cytoplasm. Its subcellular location is the cytosol. It catalyses the reaction tRNA(Asp) + L-aspartate + ATP = L-aspartyl-tRNA(Asp) + AMP + diphosphate. In terms of biological role, catalyzes the specific attachment of an amino acid to its cognate tRNA in a 2 step reaction: the amino acid (AA) is first activated by ATP to form AA-AMP and then transferred to the acceptor end of the tRNA. The sequence is that of Aspartate--tRNA ligase 1, cytoplasmic from Arabidopsis thaliana (Mouse-ear cress).